We begin with the raw amino-acid sequence, 323 residues long: tRNA U34 carboxymethyltransferase (323 aa).

Residues Lys93, Trp107, Lys112, Gly132, 154 to 156, 182 to 183, Met197, Tyr201, and Arg316 each bind carboxy-S-adenosyl-L-methionine; these read DPS and VE.

The protein belongs to the class I-like SAM-binding methyltransferase superfamily. CmoB family. In terms of assembly, homotetramer.

The enzyme catalyses carboxy-S-adenosyl-L-methionine + 5-hydroxyuridine(34) in tRNA = 5-carboxymethoxyuridine(34) in tRNA + S-adenosyl-L-homocysteine + H(+). Its function is as follows. Catalyzes carboxymethyl transfer from carboxy-S-adenosyl-L-methionine (Cx-SAM) to 5-hydroxyuridine (ho5U) to form 5-carboxymethoxyuridine (cmo5U) at position 34 in tRNAs. The sequence is that of tRNA U34 carboxymethyltransferase from Pseudoalteromonas atlantica (strain T6c / ATCC BAA-1087).